The following is a 151-amino-acid chain: UPF0178 protein Swoo_1444 (151 aa).

The protein belongs to the UPF0178 family.

The sequence is that of UPF0178 protein Swoo_1444 from Shewanella woodyi (strain ATCC 51908 / MS32).